A 644-amino-acid chain; its full sequence is MEPDDSQLSDILKDARIPDSQDIGVNLTQNLSFDTVQKMIDGVFTPIFSQGTEDSLEKDILKTPGISTIYNGILGNGEETKKRTPKISDAFEPDLNTSGDVFDSDKSEDGLMNDESYLSNTTLSQVVLDSQKYEYLRVRTEEEQQLVIEKRARERFIRKSMKIAEETALSYENDGSRELSETMTQKVTQMDFTETNVPFDGNDESSNLAVRVQSDMNLNEDCEKWMEIDVLKQKVAKSSDMAFAISSEHEKYLWTKMGCLVPIQVKWKLDKRHFNSNLSLRIRFVKYDKKENVEYAIRNPRSDVMKCRSHTEREQHFPFDSFFYIRNSEHEFSYSAEKGSTFTLIMYPGAVQANFDIIFMCQEKCLDLDDRRKTMCLAVFLDDENGNEILHAYIKQVRIVAYPRRDWKNFCEREDAKQKDFRFPELPAYKKASLESINIKQEVNLENMFNVTNTTAQMEPSTSYSSPSNSNNRKRFLNECDSPNNDYTMMHRTPPVTGYASRLHGCVPPIETEHENCQSPSMKRSRCTNYSFRTLTLSTAEYTKVVEFLAREAKVPRYTWVPTQVVSHILPTEGLERFLTAIKAGHDSVLFNANGIYTMGDMIREFEKHNDIFERIGIDSSKLSKYYEAFLSFYRIQEAMKLPK.

The DNA-binding element occupies 223–418; it reads EKWMEIDVLK…NFCEREDAKQ (196 aa). The Zn(2+) site is built by Cys-307, His-310, Cys-361, and Cys-365. Positions 528-555 are required for tertiary structure stability of the protein; that stretch reads TNYSFRTLTLSTAEYTKVVEFLAREAKV.

Belongs to the p53 family. As to quaternary structure, homodimer. Interacts (via C-terminus domain) with prmt-5; not methylated by prmt-5. Interacts with cbp-1 (via HAT domain); cep-1 transcriptional activity may be inhibited by interaction with methylated cbp-1. Component of a complex that contains prmt-5 and cbp-1. Interacts with ape-1; the interaction inhibits pro-apoptotic activity of cep-1. The cofactor is Zn(2+). Post-translationally, phosphorylated in response to IR-induced DNA damage which is thought to be mediated by akt-1. Expressed in pharyngeal muscle and neurons.

The protein localises to the nucleus. In terms of biological role, transcriptional activator that binds the same DNA consensus sequence as p53. Has a role in normal development to ensure proper meiotic chromosome segregation. Promotes apoptosis under conditions of cellular and genotoxic stress in response to DNA damage, hypoxia, or starvation. Regulates germline apoptosis in response to DNA damage. Its pro-apoptotic activity is inhibited when bound to ape-1 in vitro. Plays a role in cell cycle arrest in the germline in response to DNA damage by UV-C light. However, not required for survival in response to DNA damage induced by UV-C light, indicating that it is unlikely to be involved in DNA repair. Required for induction of ced-13 in response to DNA damage. Regulates DNA damage-induced apoptosis by inducing transcription of the programmed cell death activator egl-1. Regulates germline proliferation by activating phg-1. Modulates lifespan. The polypeptide is Transcription factor cep-1 (Caenorhabditis elegans).